A 157-amino-acid polypeptide reads, in one-letter code: Small ribosomal subunit protein uS7 (157 aa).

This sequence belongs to the universal ribosomal protein uS7 family. Part of the 30S ribosomal subunit. Contacts proteins S9 and S11.

One of the primary rRNA binding proteins, it binds directly to 16S rRNA where it nucleates assembly of the head domain of the 30S subunit. Is located at the subunit interface close to the decoding center, probably blocks exit of the E-site tRNA. This chain is Small ribosomal subunit protein uS7, found in Borrelia duttonii (strain Ly).